We begin with the raw amino-acid sequence, 469 residues long: NADH-quinone oxidoreductase subunit N (469 aa).

14 consecutive transmembrane segments (helical) span residues 6-26 (IWII…LLLG), 37-57 (VGVA…PAAL), 61-81 (LGVA…LTAA), 96-116 (ISGE…AVVS), 121-141 (LLIL…LVAI), 156-176 (LLLG…LYAA), 197-217 (PIAL…ISLV), 234-254 (VVAF…LLLL), 263-283 (LHTP…LAAL), 291-311 (MLAY…LTGS), 315-335 (FAAV…AFGA), 362-382 (AGIL…AGFI), 397-419 (IPLA…RVVV), and 441-461 (IALS…SPLL).

This sequence belongs to the complex I subunit 2 family. In terms of assembly, NDH-1 is composed of 14 different subunits. Subunits NuoA, H, J, K, L, M, N constitute the membrane sector of the complex.

Its subcellular location is the cell inner membrane. It carries out the reaction a quinone + NADH + 5 H(+)(in) = a quinol + NAD(+) + 4 H(+)(out). Functionally, NDH-1 shuttles electrons from NADH, via FMN and iron-sulfur (Fe-S) centers, to quinones in the respiratory chain. The immediate electron acceptor for the enzyme in this species is believed to be ubiquinone. Couples the redox reaction to proton translocation (for every two electrons transferred, four hydrogen ions are translocated across the cytoplasmic membrane), and thus conserves the redox energy in a proton gradient. This is NADH-quinone oxidoreductase subunit N from Geotalea uraniireducens (strain Rf4) (Geobacter uraniireducens).